The following is a 54-amino-acid chain: U-myrmicitoxin(01)-Tb5a (54 aa).

The N-terminal stretch at 1-26 (MQLSHLLLAFAMIFVMTIMYAPQVQA) is a signal peptide. A propeptide spanning residues 27–38 (DAWADANADADV) is cleaved from the precursor.

This sequence belongs to the formicidae venom precursor-01 superfamily. Post-translationally, contains 1 disulfide bond. Expressed by the venom gland.

The protein localises to the secreted. The sequence is that of U-myrmicitoxin(01)-Tb5a from Tetramorium bicarinatum (Tramp ant).